Here is a 456-residue protein sequence, read N- to C-terminus: ACT domain-containing protein ACR5 (456 aa).

ACT domains lie at V39–S115, V130–R207, I271–G347, and K349–Q432.

In terms of tissue distribution, expressed in stems and siliques.

Functionally, may bind amino acids. The polypeptide is ACT domain-containing protein ACR5 (Arabidopsis thaliana (Mouse-ear cress)).